Here is a 102-residue protein sequence, read N- to C-terminus: MPSQKIRIRLKAYDHKLLDTSVGEIVDTAKRTGARVAGPIPLPTVINKYCVLRGPHVDKKSREQFEIRTHKRLIDILEPTQQTVDALMKLDLSAGVDVEIKL.

This sequence belongs to the universal ribosomal protein uS10 family. Part of the 30S ribosomal subunit.

Its function is as follows. Involved in the binding of tRNA to the ribosomes. The chain is Small ribosomal subunit protein uS10 from Citrifermentans bemidjiense (strain ATCC BAA-1014 / DSM 16622 / JCM 12645 / Bem) (Geobacter bemidjiensis).